The primary structure comprises 346 residues: D-alanine--D-alanine ligase (346 aa).

The ATP-grasp domain maps to 133–327; the sequence is KLYAKSVGVK…ALADQISLEK (195 aa). 159-211 contacts ATP; it reads LSFPCIIKPARLGSSIGISIVKDEKDLEYAKDVGFEFDNDLVVEEFKNNIKEY. Residues aspartate 284, glutamate 296, and asparagine 298 each coordinate Mg(2+).

The protein belongs to the D-alanine--D-alanine ligase family. Mg(2+) serves as cofactor. Mn(2+) is required as a cofactor.

Its subcellular location is the cytoplasm. It catalyses the reaction 2 D-alanine + ATP = D-alanyl-D-alanine + ADP + phosphate + H(+). The protein operates within cell wall biogenesis; peptidoglycan biosynthesis. Cell wall formation. In Campylobacter jejuni subsp. jejuni serotype O:23/36 (strain 81-176), this protein is D-alanine--D-alanine ligase.